A 338-amino-acid polypeptide reads, in one-letter code: Large ribosomal subunit protein uL3 (338 aa).

Disordered regions lie at residues M1 to G44, A151 to G170, V206 to G259, and F312 to G338. The span at S22–P31 shows a compositional bias: polar residues. The segment covering G220–I237 has biased composition (basic residues). The span at R247–G259 shows a compositional bias: polar residues.

This sequence belongs to the universal ribosomal protein uL3 family. In terms of assembly, part of the 50S ribosomal subunit. Forms a cluster with proteins L14 and L24e. Interacts weakly with protein L13.

One of the primary rRNA binding proteins, it binds directly near the 3'-end of the 23S rRNA, where it nucleates assembly of the 50S subunit. The polypeptide is Large ribosomal subunit protein uL3 (rpl3) (Haloarcula marismortui (strain ATCC 43049 / DSM 3752 / JCM 8966 / VKM B-1809) (Halobacterium marismortui)).